The sequence spans 443 residues: UDP-N-acetylglucosamine 1-carboxyvinyltransferase 1 (443 aa).

22–23 is a phosphoenolpyruvate binding site; sequence KN. Arg95 is a UDP-N-acetyl-alpha-D-glucosamine binding site. The Proton donor role is filled by Cys119. Cys119 is modified (2-(S-cysteinyl)pyruvic acid O-phosphothioketal). Residues 124 to 128, Asp308, and Val330 contribute to the UDP-N-acetyl-alpha-D-glucosamine site; that span reads RPIDL.

This sequence belongs to the EPSP synthase family. MurA subfamily.

It localises to the cytoplasm. The catalysed reaction is phosphoenolpyruvate + UDP-N-acetyl-alpha-D-glucosamine = UDP-N-acetyl-3-O-(1-carboxyvinyl)-alpha-D-glucosamine + phosphate. It participates in cell wall biogenesis; peptidoglycan biosynthesis. Functionally, cell wall formation. Adds enolpyruvyl to UDP-N-acetylglucosamine. This chain is UDP-N-acetylglucosamine 1-carboxyvinyltransferase 1, found in Oceanobacillus iheyensis (strain DSM 14371 / CIP 107618 / JCM 11309 / KCTC 3954 / HTE831).